Consider the following 339-residue polypeptide: PAFGEVNQLGGVFVNGRPLPNAIRLRIVELAQLGIRPCDISRQLRVSHGCVSKILARYNETGSILPGAIGGSKPRVTTPTVVKHIRTYKQRDPGIFAWEIRDRLLADGVCDKYNVPSVSSISRILRNKIGNLSQQGHYESYKQHQPPPQPPLPYNHIYSYPSPIAAAGAKVPTPPGVPAIPGTMAMPRTWPSSHSVTDILGIRSITDQVSDTSSYPSPKVEEWSSLGRSSFPPAAQHAVNGLEKSSLEQEAKYSQAHNGLPAVGSFVSAPAMSPYATSAQVSPYMPYSAAPSSYMAGHGWQHTAGTPLSPHGCDLPASLAFKGVQTAREGSHSVTASAL.

Positions 2–128 (AFGEVNQLGG…SSISRILRNK (127 aa)) form a DNA-binding region, paired. A PAI subdomain region spans residues 5-61 (EVNQLGGVFVNGRPLPNAIRLRIVELAQLGIRPCDISRQLRVSHGCVSKILARYNET). Positions 80-128 (TVVKHIRTYKQRDPGIFAWEIRDRLLADGVCDKYNVPSVSSISRILRNK) are RED subdomain.

Its subcellular location is the nucleus. The sequence is that of Paired box protein Pax-9 (PAX9) from Gallus gallus (Chicken).